Consider the following 222-residue polypeptide: RNA-binding protein KhpB (222 aa).

The tract at residues 2 to 51 (DMVTVTAKTVEEAVTKALIELQTTSDKLTYEIVEKGSAGFLGIGSKPAII) is jag_N domain. A KH domain is found at 54-133 (KRKETLQDKA…KSSSDYIRVK (80 aa)). The R3H domain occupies 138–204 (NYRERRKETL…EEPFRHVIIS (67 aa)).

It belongs to the KhpB RNA-binding protein family. In terms of assembly, forms a complex with KhpA. Homodimer or homotrimer.

The protein localises to the cytoplasm. Its function is as follows. A probable RNA chaperone. Forms a complex with KhpA which binds to cellular RNA and controls its expression. Plays a role in peptidoglycan (PG) homeostasis and cell length regulation. The sequence is that of RNA-binding protein KhpB from Clostridium symbiosum (Bacteroides symbiosus).